A 389-amino-acid chain; its full sequence is Inner membrane transport protein YdhP (389 aa).

Over 1–6 the chain is Cytoplasmic; sequence MKINYP. The helical transmembrane segment at 7-27 threads the bilayer; that stretch reads LLALAIGAFGIGTTEFSPMGL. Residues 28 to 43 are Periplasmic-facing; the sequence is LPVIARGVDVSIPAAG. Residues 44-64 traverse the membrane as a helical segment; that stretch reads MLISAYAVGVMVGAPLMTLLL. Topologically, residues 65–70 are cytoplasmic; it reads SHRARR. The chain crosses the membrane as a helical span at residues 71–91; it reads SALIFLMAIFTLGNVLSAIAP. Over 92-100 the chain is Periplasmic; that stretch reads DYMTLMLSR. Residues 101-121 form a helical membrane-spanning segment; the sequence is ILTSLNHGAFFGLGSVVAASV. The Cytoplasmic segment spans residues 122-130; sequence VPKHKQASA. The helical transmembrane segment at 131 to 151 threads the bilayer; that stretch reads VATMFMGLTLANIGGVPAATW. Over 152–159 the chain is Periplasmic; that stretch reads LGETIGWR. A helical membrane pass occupies residues 160–180; sequence MSFLATAGLGVISMVSLFFSL. Residues 181–203 are Cytoplasmic-facing; sequence PKGGAGARPEVKKELAVLMRPQV. Residues 204-224 form a helical membrane-spanning segment; it reads LSALLTTVLGAGAMFTLYTYI. The Periplasmic portion of the chain corresponds to 225 to 236; sequence SPVLQSITHATP. A helical membrane pass occupies residues 237–257; that stretch reads VFVTAMLVLIGVGFSIGNYLG. Residues 258-266 are Cytoplasmic-facing; sequence GKLADRSVN. The chain crosses the membrane as a helical span at residues 267-287; the sequence is GTLKGFLLLLMVIMLAIPFLA. Residues 288–290 are Periplasmic-facing; sequence RNK. A helical membrane pass occupies residues 291–311; that stretch reads FGAAISMAVWGAATFAVVPPL. Topologically, residues 312-330 are cytoplasmic; sequence QMRVMRVASEAPGLSSSVN. The chain crosses the membrane as a helical span at residues 331–351; it reads IGAFNLGNALGAAAGGAVISA. At 352–356 the chain is on the periplasmic side; it reads GLGYS. Residues 357-377 traverse the membrane as a helical segment; sequence FVPVMGAIVAGLALLLVFMSA. Topologically, residues 378–389 are cytoplasmic; that stretch reads RKQPETVCVANS.

The protein belongs to the major facilitator superfamily.

The protein localises to the cell inner membrane. The sequence is that of Inner membrane transport protein YdhP (ydhP) from Escherichia coli O157:H7.